A 199-amino-acid chain; its full sequence is dTTP/UTP pyrophosphatase (199 aa).

Aspartate 75 functions as the Proton acceptor in the catalytic mechanism.

This sequence belongs to the Maf family. YhdE subfamily. A divalent metal cation is required as a cofactor.

Its subcellular location is the cytoplasm. The catalysed reaction is dTTP + H2O = dTMP + diphosphate + H(+). It carries out the reaction UTP + H2O = UMP + diphosphate + H(+). Its function is as follows. Nucleoside triphosphate pyrophosphatase that hydrolyzes dTTP and UTP. May have a dual role in cell division arrest and in preventing the incorporation of modified nucleotides into cellular nucleic acids. The polypeptide is dTTP/UTP pyrophosphatase (Methylobacillus flagellatus (strain ATCC 51484 / DSM 6875 / VKM B-1610 / KT)).